A 351-amino-acid polypeptide reads, in one-letter code: Peptide chain release factor 1 (351 aa).

Position 229 is an N5-methylglutamine (Q229).

The protein belongs to the prokaryotic/mitochondrial release factor family. Post-translationally, methylated by PrmC. Methylation increases the termination efficiency of RF1.

The protein localises to the cytoplasm. In terms of biological role, peptide chain release factor 1 directs the termination of translation in response to the peptide chain termination codons UAG and UAA. The chain is Peptide chain release factor 1 from Cereibacter sphaeroides (strain KD131 / KCTC 12085) (Rhodobacter sphaeroides).